We begin with the raw amino-acid sequence, 506 residues long: Histidine ammonia-lyase (506 aa).

A cross-link (5-imidazolinone (Ala-Gly)) is located at residues 143 to 145 (ASG). Ser-144 carries the post-translational modification 2,3-didehydroalanine (Ser).

This sequence belongs to the PAL/histidase family. In terms of processing, contains an active site 4-methylidene-imidazol-5-one (MIO), which is formed autocatalytically by cyclization and dehydration of residues Ala-Ser-Gly.

It is found in the cytoplasm. The catalysed reaction is L-histidine = trans-urocanate + NH4(+). Its pathway is amino-acid degradation; L-histidine degradation into L-glutamate; N-formimidoyl-L-glutamate from L-histidine: step 1/3. The polypeptide is Histidine ammonia-lyase (Salmonella paratyphi A (strain ATCC 9150 / SARB42)).